The chain runs to 235 residues: Protocatechuate 3,4-dioxygenase beta chain (235 aa).

Fe cation contacts are provided by tyrosine 107, tyrosine 146, histidine 159, and histidine 161.

This sequence belongs to the intradiol ring-cleavage dioxygenase family. As to quaternary structure, the enzyme is an oligomer of 12 copies of the alpha and beta chains. Fe(3+) serves as cofactor.

It carries out the reaction 3,4-dihydroxybenzoate + O2 = 3-carboxy-cis,cis-muconate + 2 H(+). It functions in the pathway aromatic compound metabolism; beta-ketoadipate pathway; 3-carboxy-cis,cis-muconate from 3,4-dihydroxybenzoate: step 1/1. Functionally, plays an essential role in the utilization of numerous aromatic and hydroaromatic compounds via the beta-ketoadipate pathway. This Burkholderia cepacia (Pseudomonas cepacia) protein is Protocatechuate 3,4-dioxygenase beta chain (pcaH).